The sequence spans 276 residues: Thiazole synthase (276 aa).

K112 functions as the Schiff-base intermediate with DXP in the catalytic mechanism. Residues G173, A199 to G200, and N221 to T222 each bind 1-deoxy-D-xylulose 5-phosphate.

Belongs to the ThiG family. As to quaternary structure, homotetramer. Forms heterodimers with either ThiH or ThiS.

Its subcellular location is the cytoplasm. It catalyses the reaction [ThiS sulfur-carrier protein]-C-terminal-Gly-aminoethanethioate + 2-iminoacetate + 1-deoxy-D-xylulose 5-phosphate = [ThiS sulfur-carrier protein]-C-terminal Gly-Gly + 2-[(2R,5Z)-2-carboxy-4-methylthiazol-5(2H)-ylidene]ethyl phosphate + 2 H2O + H(+). The protein operates within cofactor biosynthesis; thiamine diphosphate biosynthesis. Functionally, catalyzes the rearrangement of 1-deoxy-D-xylulose 5-phosphate (DXP) to produce the thiazole phosphate moiety of thiamine. Sulfur is provided by the thiocarboxylate moiety of the carrier protein ThiS. In vitro, sulfur can be provided by H(2)S. This is Thiazole synthase from Synechococcus sp. (strain ATCC 27144 / PCC 6301 / SAUG 1402/1) (Anacystis nidulans).